A 360-amino-acid polypeptide reads, in one-letter code: Peptide chain release factor 1 (360 aa).

Residue Q237 is modified to N5-methylglutamine.

It belongs to the prokaryotic/mitochondrial release factor family. In terms of processing, methylated by PrmC. Methylation increases the termination efficiency of RF1.

The protein localises to the cytoplasm. Functionally, peptide chain release factor 1 directs the termination of translation in response to the peptide chain termination codons UAG and UAA. The protein is Peptide chain release factor 1 of Cellvibrio japonicus (strain Ueda107) (Pseudomonas fluorescens subsp. cellulosa).